The following is a 35-amino-acid chain: Photosystem II reaction center protein T (35 aa).

The helical transmembrane segment at 3–23 threads the bilayer; that stretch reads ALVYTFLLVSTLGIIFFAIFF.

It belongs to the PsbT family. In terms of assembly, PSII is composed of 1 copy each of membrane proteins PsbA, PsbB, PsbC, PsbD, PsbE, PsbF, PsbH, PsbI, PsbJ, PsbK, PsbL, PsbM, PsbT, PsbY, PsbZ, Psb30/Ycf12, at least 3 peripheral proteins of the oxygen-evolving complex and a large number of cofactors. It forms dimeric complexes.

The protein localises to the plastid. It is found in the chloroplast thylakoid membrane. Functionally, found at the monomer-monomer interface of the photosystem II (PS II) dimer, plays a role in assembly and dimerization of PSII. PSII is a light-driven water plastoquinone oxidoreductase, using light energy to abstract electrons from H(2)O, generating a proton gradient subsequently used for ATP formation. The sequence is that of Photosystem II reaction center protein T from Gossypium barbadense (Sea Island cotton).